Reading from the N-terminus, the 189-residue chain is Large ribosomal subunit protein bL9 (189 aa).

This sequence belongs to the bacterial ribosomal protein bL9 family.

In terms of biological role, binds to the 23S rRNA. The polypeptide is Large ribosomal subunit protein bL9 (Brucella canis (strain ATCC 23365 / NCTC 10854 / RM-666)).